Reading from the N-terminus, the 276-residue chain is Putative ripening-related protein 5 (276 aa).

The N-terminal stretch at 1 to 18 is a signal peptide; that stretch reads MAMIFLLAALSTTHLASS.

This sequence belongs to the kiwellin family.

Its subcellular location is the secreted. This is Putative ripening-related protein 5 from Oryza sativa subsp. japonica (Rice).